Reading from the N-terminus, the 392-residue chain is Neutrophil cytosol factor 1 (392 aa).

Residues 4–125 form the PX domain; that stretch reads HFIRHIALLG…NFFKVRPDDL (122 aa). 2 consecutive SH3 domains span residues 156 to 215 and 226 to 285; these read IILQ…PLDS and YAGE…KAGQ. Residues 290 to 392 form a disordered region; the sequence is AKSQIKSRGA…STKRKLASAV (103 aa). A phosphoserine mark is found at S304 and S305. Residues 310–319 are compositionally biased toward basic residues; the sequence is HSIHQRSRKR. A phosphoserine mark is found at S321, S329, and S348. The span at 376–385 shows a compositional bias: basic and acidic residues; it reads ILHRCSESTK.

Component of the phagocyte NADPH oxidase complex composed of an obligatory core heterodimer formed by the membrane proteins CYBA and CYBB and the cytosolic regulatory subunits NCF1/p47-phox, NCF2/p67-phox, NCF4/p40-phox and the small GTPase RAC1 or RAC2. Part of a cytosolic complex composed at least by NCF1, NCF2 and NCF4. Interacts (via C-terminus) with NCF2 (via the C-terminal SH3 domain). Interacts with NCF4. Interacts with CYBB. Interacts (via the second SH3 domain) with CYBA; interaction is phosphorylation-dependent. Interacts with NOXA1. Interacts with ADAM15. Interacts with TRAF4. Interacts with FASLG. Interacts with PARK7 (via C-terminus); the interaction is enhanced by LPS and modulates NCF1 phosphorylation and membrane translocation. Post-translationally, phosphorylated by PRKCD; phosphorylation induces activation of NCF1, leading to assembly and activation of the NADPH oxidase complex.

The protein resides in the cytoplasm. It localises to the cytosol. It is found in the membrane. Its function is as follows. Subunit of the phagocyte NADPH oxidase complex that mediates the transfer of electrons from cytosolic NADPH to O2 to produce the superoxide anion (O2(-)). In the activated complex, electrons are first transferred from NADPH to flavin adenine dinucleotide (FAD) and subsequently transferred via two heme molecules to molecular oxygen, producing superoxide through an outer-sphere reaction. Activation of the NADPH oxidase complex is initiated by the assembly of cytosolic subunits of the NADPH oxidase complex with the core NADPH oxidase complex to form a complex at the plasma membrane or phagosomal membrane. This activation process is initiated by phosphorylation dependent binding of the cytosolic NCF1/p47-phox subunit to the C-terminus of CYBA/p22-phox. This is Neutrophil cytosol factor 1 from Bos taurus (Bovine).